The following is a 1046-amino-acid chain: Nuclear pore complex protein NUP96 (1046 aa).

The region spanning 51-187 is the Peptidase S59 domain; sequence SPDYFLKPCI…GLWKFFVPHF (137 aa). A compositionally biased stretch (polar residues) spans 283 to 295; it reads RNVRPSQKIAQRN. Residues 283-304 form a disordered region; sequence RNVRPSQKIAQRNSHQDPPPVV. Ser-523 bears the Phosphoserine mark.

Part of the nuclear pore complex (NPC). The NPC has an eight-fold symmetrical structure comprising a central transport channel and two rings, the cytoplasmic and nuclear rings, to which eight filaments are attached. The cytoplasmic filaments have loose ends, while the nuclear filaments are joined in a distal ring, forming a nuclear basket. NPCs are highly dynamic in configuration and composition, and can be devided in 3 subcomplexes, the NUP62 subcomplex, the NUP107-160 subcomplex and the NUP93 subcomplex, containing approximately 30 different nucleoporin proteins. Expressed in roots, leaves, stems, flowers and siliques.

The protein localises to the nucleus membrane. It is found in the nucleus. The protein resides in the nuclear pore complex. Contributes to the transfer of mature mRNA from the nucleus to the cytosol. Required for both R gene-mediated and basal disease resistance. RNA export seems to play a critical role in stress responses and regulation of plant growth and development. The sequence is that of Nuclear pore complex protein NUP96 from Arabidopsis thaliana (Mouse-ear cress).